Reading from the N-terminus, the 856-residue chain is Beta-galactosidase 3 (856 aa).

Residues 1–31 (MREMGTGDSASRLILWFCLGFLILGVGFVQC) form the signal peptide. E189 serves as the catalytic Proton donor. Residue E258 is the Nucleophile of the active site. N468 carries an N-linked (GlcNAc...) asparagine glycan. The region spanning 760–846 (TFHRPKVHLK…KRLTVEAVCA (87 aa)) is the SUEL-type lectin domain.

This sequence belongs to the glycosyl hydrolase 35 family. In terms of tissue distribution, ubiquitous.

It localises to the secreted. The protein localises to the extracellular space. Its subcellular location is the apoplast. It carries out the reaction Hydrolysis of terminal non-reducing beta-D-galactose residues in beta-D-galactosides.. The sequence is that of Beta-galactosidase 3 (BGAL3) from Arabidopsis thaliana (Mouse-ear cress).